The sequence spans 459 residues: Fibrinogen C domain-containing protein 1 (459 aa).

Positions 1 to 22 (MVHERWKTVGSASQLEDRPRDK) are disordered. Residues 1–33 (MVHERWKTVGSASQLEDRPRDKPQRASCSYVLC) are Cytoplasmic-facing. Residues 34 to 54 (TVLLSLAVLLAVAVTGVVLFL) traverse the membrane as a helical; Signal-anchor for type II membrane protein segment. At 55 to 459 (NHTHTPGTAP…MKIRPVREDR (405 aa)) the chain is on the extracellular side. In terms of domain architecture, Fibrinogen C-terminal spans 233 to 456 (CANGSRPRDC…FSEMKIRPVR (224 aa)). Residues Cys-242 and Cys-271 are joined by a disulfide bond. Asn-338 is a glycosylation site (N-linked (GlcNAc...) asparagine). Ca(2+) contacts are provided by Asp-391 and Asp-393. An intrachain disulfide couples Cys-399 to Cys-412.

In terms of assembly, homotetramer; disulfide-linked.

Its subcellular location is the membrane. In terms of biological role, acetyl group-binding receptor which shows a high-affinity and calcium-dependent binding to acetylated structures such as chitin, some N-acetylated carbohydrates, and amino acids, but not to their non-acetylated counterparts. Can facilitate the endocytosis of acetylated components. The sequence is that of Fibrinogen C domain-containing protein 1 (Fibcd1) from Mus musculus (Mouse).